The sequence spans 311 residues: Cytosolic Fe-S cluster assembly factor Nubp1 homolog (311 aa).

[4Fe-4S] cluster contacts are provided by cysteine 9, cysteine 23, cysteine 26, and cysteine 32. 63–70 (GKGGVGKS) is a binding site for ATP. [4Fe-4S] cluster contacts are provided by cysteine 240 and cysteine 243.

It belongs to the Mrp/NBP35 ATP-binding proteins family. NUBP1/NBP35 subfamily. In terms of assembly, heterotetramer of 2 Nubp1 and 2 Nubp2 chains. [4Fe-4S] cluster serves as cofactor.

Its subcellular location is the cytoplasm. Component of the cytosolic iron-sulfur (Fe/S) protein assembly (CIA) machinery. Required for maturation of extramitochondrial Fe-S proteins. The Nubp1-Nubp2 heterotetramer forms a Fe-S scaffold complex, mediating the de novo assembly of an Fe-S cluster and its transfer to target apoproteins. The sequence is that of Cytosolic Fe-S cluster assembly factor Nubp1 homolog from Drosophila pseudoobscura pseudoobscura (Fruit fly).